A 2135-amino-acid polypeptide reads, in one-letter code: Protein SUBSTANDARD STARCH GRAIN 4, chloroplastic (2135 aa).

Low complexity-rich tracts occupy residues 1–10 (MSHCLRASPF) and 72–84 (QHQPLLPTRRQQQ). The transit peptide at 1 to 42 (MSHCLRASPFLSPPPPLLHPSRRRRHRQGGCIHTSPGTRPLV) directs the protein to the chloroplast. Disordered regions lie at residues 1–44 (MSHC…LVAR) and 58–89 (SDSSDCPAPHHPHSQHQPLLPTRRQQQQPPPP). At 43-104 (ARARFDPPPL…ASLAPLWREG (62 aa)) the chain is on the stromal side. Residues 105–125 (LFLVRCSVFAAALSVAAALSW) form a helical membrane-spanning segment. Topologically, residues 126 to 2135 (YAQLRARSFV…LFEYSATSQG (2010 aa)) are chloroplast intermembrane. Over residues 361–370 (RRRYRRKAHS) the composition is skewed to basic residues. Disordered regions lie at residues 361 to 382 (RRRYRRKAHSKLISDTDNSSQQ), 401 to 492 (SGNP…QVSE), and 1843 to 1869 (FLGSLSTSPDGQQSETERTPEHGSFKP). 3 stretches are compositionally biased toward polar residues: residues 373 to 382 (ISDTDNSSQQ), 454 to 490 (NFASTMLIGNTDVLNGSSHNQQPSQISSHSWENNEQV), and 1846 to 1856 (SLSTSPDGQQS). Residues 1857–1866 (ETERTPEHGS) are compositionally biased toward basic and acidic residues.

This sequence belongs to the TamB family. As to quaternary structure, part of the TIC complex, which can interact with components of the TOC complex to form a larger import complex. In terms of tissue distribution, highly expressed in third leaf and developing seeds. Expressed in anthers, pistils, flag leaves and young panicles.

Its subcellular location is the plastid. It is found in the chloroplast inner membrane. The protein resides in the chloroplast intermembrane space. The protein localises to the chloroplast. It localises to the amyloplast. In terms of biological role, part of the inner chloroplast membrane translocon complex (TIC) which associates with the outer chloroplast membrane translocon complex (TOC) and forms a supercomplex involved in protein precursor import into the chloroplast stroma. Required for the regulation of starch granule size in amyloplasts. This chain is Protein SUBSTANDARD STARCH GRAIN 4, chloroplastic, found in Oryza sativa subsp. japonica (Rice).